Here is a 369-residue protein sequence, read N- to C-terminus: S-(hydroxymethyl)glutathione dehydrogenase (369 aa).

Zn(2+)-binding residues include cysteine 40, histidine 62, cysteine 92, cysteine 95, cysteine 98, cysteine 106, and cysteine 169.

Belongs to the zinc-containing alcohol dehydrogenase family. Class-III subfamily. Homodimer. Requires Zn(2+) as cofactor.

The protein resides in the cytoplasm. It catalyses the reaction S-(hydroxymethyl)glutathione + NADP(+) = S-formylglutathione + NADPH + H(+). The catalysed reaction is S-(hydroxymethyl)glutathione + NAD(+) = S-formylglutathione + NADH + H(+). The enzyme catalyses a primary alcohol + NAD(+) = an aldehyde + NADH + H(+). It carries out the reaction a secondary alcohol + NAD(+) = a ketone + NADH + H(+). It catalyses the reaction S-nitrosoglutathione + NADH + H(+) = S-(hydroxysulfenamide)glutathione + NAD(+). Its function is as follows. Has high formaldehyde dehydrogenase activity in the presence of glutathione and catalyzes the oxidation of normal alcohols in a reaction that is not GSH-dependent. In addition, hemithiolacetals other than those formed from GSH, including omega-thiol fatty acids, also are substrates. Also acts as a S-nitroso-glutathione reductase by catalyzing the NADH-dependent reduction of S-nitrosoglutathione. The sequence is that of S-(hydroxymethyl)glutathione dehydrogenase (frmA) from Photobacterium damsela subsp. piscicida (Pasteurella piscicida).